Reading from the N-terminus, the 131-residue chain is Small ribosomal subunit protein uS8 (131 aa).

This sequence belongs to the universal ribosomal protein uS8 family. As to quaternary structure, part of the 30S ribosomal subunit. Contacts proteins S5 and S12.

Functionally, one of the primary rRNA binding proteins, it binds directly to 16S rRNA central domain where it helps coordinate assembly of the platform of the 30S subunit. This Dictyoglomus turgidum (strain DSM 6724 / Z-1310) protein is Small ribosomal subunit protein uS8.